The chain runs to 79 residues: Morintide mO1 (79 aa).

The N-terminal stretch at 1–20 (MAKLSFLSLFLLCLVATATA) is a signal peptide. The Chitin-binding type-1 domain maps to 21-63 (QNCGRQAGNRACANQLCCSQYGFCGSTSEYCSRANGCQSNCRG). Disulfide bonds link C23-C38, C32-C44, C37-C51, and C57-C61. Residues 64 to 79 (GGGADGAGGEAGGGGP) constitute a propeptide that is removed on maturation.

In terms of tissue distribution, leaves (at protein level).

Functionally, chitin-binding protein which functions in defense against chitin-containing fungal pathogens. Inhibits the growth of budding hyphae in A.alternata and A.brassiciola. This chain is Morintide mO1, found in Moringa oleifera (Horseradish tree).